A 432-amino-acid chain; its full sequence is Endosome-associated-trafficking regulator 1 (432 aa).

S18 carries the phosphoserine modification. A compositionally biased stretch (basic and acidic residues) spans 126–143 (DTTTSRIYPKEASRHPLG). Residues 126–145 (DTTTSRIYPKEASRHPLGLE) are disordered. S148 is subject to Phosphoserine. The interval 174-196 (LEEDEDDGWNITYLPSAVDQTHS) is required for interaction with PTPN13. The disordered stretch occupies residues 226-250 (PPWTLSDTDSRISPASPAGSPNADF). A phosphoserine mark is found at S241 and S245. Coiled coils occupy residues 262 to 289 (LRTLQISYEALKDENSKLRRKLNEVQSF) and 315 to 370 (FHDL…LRSG).

It belongs to the ENTR1 family. As to quaternary structure, found in a complex with ENTR1, PTPN13 and GIT1. Interacts with PTPN13 (via the FERM domain). Interacts (via N-terminus) with GIT1 (via N- and C-terminus); this interaction is direct. Interacts with NOD2. Interacts (via N-terminus) with IFT88. Interacts with VPS35. Post-translationally, phosphorylated.

It localises to the cytoplasm. It is found in the early endosome. The protein resides in the endosome. Its subcellular location is the recycling endosome. The protein localises to the midbody. It localises to the cytoskeleton. It is found in the microtubule organizing center. The protein resides in the centrosome. Its subcellular location is the cilium basal body. Its function is as follows. May be involved in modulation of TNF response. May be involved in presentation of TNFRSF1A on the cell surface. Involved in the endosome-to-plasma membrane trafficking and recycling of SNX27-retromer-dependent cargo proteins, such as GLUT1. Involved in the regulation of cytokinesis; the function may involve PTPN13 and GIT1. Functionally, endosome-associated protein that plays a role in membrane receptor sorting, cytokinesis and ciliogenesis. Involved in the endosome-to-plasma membrane trafficking and recycling of SNX27-retromer-dependent cargo proteins, such as GLUT1. Involved in the regulation of cytokinesis; the function may involve PTPN13 and GIT1. Plays a role in the formation of cilia. Involved in cargo protein localization, such as PKD2, at primary cilia. Involved in the presentation of the tumor necrosis factor (TNF) receptor TNFRSF1A on the cell surface, and hence in the modulation of the TNF-induced apoptosis. The chain is Endosome-associated-trafficking regulator 1 from Mus musculus (Mouse).